A 141-amino-acid polypeptide reads, in one-letter code: Cystatin-S (141 aa).

The N-terminal stretch at M1–A20 is a signal peptide. Residues S21 and S23 each carry the phosphoserine modification. Positions Q76–G80 match the Secondary area of contact motif. Disulfide bonds link C94–C104 and C118–C138.

It belongs to the cystatin family. Post-translationally, phosphorylated at both its N- and C-terminal regions. Expressed in submandibular and sublingual saliva but not in parotid saliva (at protein level). Expressed in saliva, tears, urine and seminal fluid.

Its subcellular location is the secreted. In terms of biological role, this protein strongly inhibits papain and ficin, partially inhibits stem bromelain and bovine cathepsin C, but does not inhibit porcine cathepsin B or clostripain. Papain is inhibited non-competitively. This is Cystatin-S (CST4) from Homo sapiens (Human).